The following is a 671-amino-acid chain: DNA ligase (671 aa).

NAD(+)-binding positions include 32 to 36 (DAEYD), 81 to 82 (SL), and Glu-113. Lys-115 (N6-AMP-lysine intermediate) is an active-site residue. The NAD(+) site is built by Arg-136, Glu-173, Lys-290, and Lys-314. Cys-408, Cys-411, Cys-426, and Cys-432 together coordinate Zn(2+). A BRCT domain is found at 593–671 (EIDSPFAGKT…EAEMLRLLGS (79 aa)).

This sequence belongs to the NAD-dependent DNA ligase family. LigA subfamily. Mg(2+) serves as cofactor. The cofactor is Mn(2+).

The enzyme catalyses NAD(+) + (deoxyribonucleotide)n-3'-hydroxyl + 5'-phospho-(deoxyribonucleotide)m = (deoxyribonucleotide)n+m + AMP + beta-nicotinamide D-nucleotide.. DNA ligase that catalyzes the formation of phosphodiester linkages between 5'-phosphoryl and 3'-hydroxyl groups in double-stranded DNA using NAD as a coenzyme and as the energy source for the reaction. It is essential for DNA replication and repair of damaged DNA. The polypeptide is DNA ligase (Shigella flexneri serotype 5b (strain 8401)).